The primary structure comprises 334 residues: Cysteine and histidine-rich domain-containing protein 1 (334 aa).

Residues cysteine 5, cysteine 10, cysteine 24, histidine 27, cysteine 42, cysteine 43, cysteine 59, histidine 64, cysteine 156, cysteine 161, cysteine 175, histidine 178, cysteine 193, cysteine 194, cysteine 210, and histidine 215 each coordinate Zn(2+). 2 consecutive CHORD domains span residues 5–64 (CYNR…KGQH) and 156–215 (CKNG…KGTH). A CS domain is found at 226 to 315 (VVPCRHDWHQ…AEFMTWARLE (90 aa)).

Functionally, regulates centrosome duplication. The protein is Cysteine and histidine-rich domain-containing protein 1 (chordc1) of Xenopus laevis (African clawed frog).